We begin with the raw amino-acid sequence, 453 residues long: Secreted aspartic protease 10 (453 aa).

Positions 1–20 (MDLVIMNFVFLLYLTSVVKC) are cleaved as a signal peptide. One can recognise a Peptidase A1 domain in the interval 52–372 (YTTELEIGSN…DLQDMTISVA (321 aa)). Asp70 is an active-site residue. 70 to 72 (DTG) is a pepstatin A binding site. Cysteines 85 and 112 form a disulfide. 2 N-linked (GlcNAc...) asparagine glycosylation sites follow: Asn115 and Asn128. A pepstatin A-binding site is contributed by 138-139 (VD). 4 N-linked (GlcNAc...) asparagine glycosylation sites follow: Asn168, Asn208, Asn211, and Asn245. The active site involves Asp266. Residue 266 to 270 (DTGST) coordinates pepstatin A. Asn287 carries an N-linked (GlcNAc...) asparagine glycan. Residues Cys301 and Cys333 are joined by a disulfide bond. The tract at residues 387-432 (NPNEDQNEVPTSTSFTQSASSSGSQPSSTISGENMDKNTTSSSSGN) is disordered. Over residues 397-417 (TSTSFTQSASSSGSQPSSTIS) the composition is skewed to low complexity. A compositionally biased stretch (polar residues) spans 423 to 432 (KNTTSSSSGN). A glycan (N-linked (GlcNAc...) asparagine) is linked at Asn424. A lipid anchor (GPI-anchor amidated serine) is attached at Ser429. A propeptide spans 430–453 (SGNCQTRSWIAILSALFLVYIHII) (removed in mature form).

It belongs to the peptidase A1 family. Post-translationally, the GPI-anchor is attached to the protein in the endoplasmic reticulum and serves to target the protein to the cell surface. There, the glucosamine-inositol phospholipid moiety is cleaved off and the GPI-modified mannoprotein is covalently attached via its lipidless GPI glycan remnant to the 1,6-beta-glucan of the outer cell wall layer.

Its subcellular location is the secreted. It is found in the cell membrane. The catalysed reaction is Preferential cleavage at the carboxyl of hydrophobic amino acids, but fails to cleave 15-Leu-|-Tyr-16, 16-Tyr-|-Leu-17 and 24-Phe-|-Phe-25 of insulin B chain. Activates trypsinogen, and degrades keratin.. Secreted aspartic peptidases (SAPs) are a group of ten acidic hydrolases considered as key virulence factors. These enzymes supply the fungus with nutrient amino acids as well as are able to degrade the selected host's proteins involved in the immune defense. Required for cell surface integrity and cell separation during budding. In Candida albicans (strain SC5314 / ATCC MYA-2876) (Yeast), this protein is Secreted aspartic protease 10.